We begin with the raw amino-acid sequence, 507 residues long: uncharacterized protein (507 aa).

3 disordered regions span residues 91 to 162, 174 to 255, and 309 to 422; these read NEKT…KKLL, EKLQ…QQQQ, and KRKL…NYST. Residues 116–143 show a composition bias toward acidic residues; that stretch reads DSSESDSSESESDSSESESESESNETSE. The segment covering 144-155 has biased composition (low complexity); that stretch reads NESSSSSEPESS. Positions 174–193 are enriched in basic and acidic residues; that stretch reads EKLQQEQQKQKEAQKPKEKP. Low complexity-rich tracts occupy residues 194–236, 243–255, and 313–350; these read QQQQ…QQIE, PQQQ…QQQQ, and QSQL…TNKP. The span at 351–360 shows a compositional bias: basic residues; the sequence is LSKRQKKLLK. Residues 378-409 are compositionally biased toward low complexity; the sequence is NNKNDNSTNDSNNNNDNNNNNKNDTNDSNNDD.

This is an uncharacterized protein from Dictyostelium discoideum (Social amoeba).